We begin with the raw amino-acid sequence, 246 residues long: Dehydration-responsive element-binding protein 1H (246 aa).

The disordered stretch occupies residues 1–43 (MDMAGHEVNSSSSSSGAESSSSSSGRQQYKKRPAGRTKFRETR). Residues 10 to 24 (SSSSSSGAESSSSSS) are compositionally biased toward low complexity. Basic residues predominate over residues 28–37 (QYKKRPAGRT). Positions 46–110 (VYRGVRRRGG…GGGAACLNFQ (65 aa)) form a DNA-binding region, AP2/ERF. A disordered region spans residues 155-187 (AMDEATSGVSAPPPLANNAGSSETPGPSSIDGT). The span at 172 to 181 (NAGSSETPGP) shows a compositional bias: polar residues.

Belongs to the AP2/ERF transcription factor family. ERF subfamily.

The protein resides in the nucleus. Transcriptional activator that binds specifically to the DNA sequence 5'-[AG]CCGAC-3'. Binding to the C-repeat/DRE element mediates high salinity- and dehydration-inducible transcription. In Oryza sativa subsp. indica (Rice), this protein is Dehydration-responsive element-binding protein 1H (DREB1H).